We begin with the raw amino-acid sequence, 1598 residues long: Serine/threonine-protein kinase Nek1 (1598 aa).

The Protein kinase domain occupies 106–380; the sequence is YEVIRQIGAG…ALQCLGYTIF (275 aa). ATP is bound by residues 112 to 120 and K135; that span reads IGAGRFGEV. D240 functions as the Proton acceptor in the catalytic mechanism.

This sequence belongs to the protein kinase superfamily. NEK Ser/Thr protein kinase family. NIMA subfamily.

It localises to the cytoplasm. The protein localises to the cytoskeleton. Its subcellular location is the microtubule organizing center. The protein resides in the centrosome. It is found in the spindle pole. It catalyses the reaction L-seryl-[protein] + ATP = O-phospho-L-seryl-[protein] + ADP + H(+). It carries out the reaction L-threonyl-[protein] + ATP = O-phospho-L-threonyl-[protein] + ADP + H(+). Its activity is regulated as follows. Phosphorylation status of the T-loop (amino acids 267-293) modulates kinase activity and subcellular localization of the protein. Functionally, probable serine/threonine-protein kinase. Involved in controlling centrosome splitting. Promotes separation of the centrosome outer cores. The sequence is that of Serine/threonine-protein kinase Nek1 from Toxoplasma gondii (strain ATCC 50611 / Me49).